The following is a 156-amino-acid chain: Interleukin-36 receptor antagonist protein (156 aa).

C9 and C155 are oxidised to a cystine.

It belongs to the IL-1 family. Interacts with cargo receptor TMED10; the interaction mediates the translocation from the cytoplasm into the ERGIC (endoplasmic reticulum-Golgi intermediate compartment) and thereby secretion. Post-translationally, removal of N-terminal methionine is necessary for full antagonistic activity. As to expression, highly abundant in embryonic tissue and tissues containing epithelial cells.

Its subcellular location is the cytoplasm. It is found in the secreted. Functionally, inhibits the activity of interleukin-36 (IL36A,IL36B and IL36G) by binding to receptor IL1RL2/IL-36R and preventing its association with the coreceptor IL1RAP for signaling. Part of the IL-36 signaling system that is thought to be present in epithelial barriers and to take part in local inflammatory response; similar to the IL-1 system with which it shares the coreceptor. Proposed to play a role in skin inflammation. May be involved in the innate immune response to fungal pathogens. May activate an anti-inflammatory signaling pathway by recruiting SIGIRR. The protein is Interleukin-36 receptor antagonist protein of Mus musculus (Mouse).